A 49-amino-acid polypeptide reads, in one-letter code: MTKRTTIAARRVGLIDLGKATRQTKGLTQIQALDSVSGQFRDQLGLSAD.

Residues 1–25 (MTKRTTIAARRVGLIDLGKATRQTK) constitute a propeptide that is removed on maturation. A cross-link (isoaspartyl glycine isopeptide (Gly-Asp)) is located at residues 26–34 (GLTQIQALD).

In terms of processing, this lasso peptide is hydrolyzed to a linear form by the isopeptidase AtxE2, in vitro. The isopeptidase AtxE2 only recognizes the threaded form (but not the unthreaded form).

The protein resides in the cytoplasm. The protein localises to the secreted. Functionally, shows weak antimicrobial activity against its phylogenetic relative Caulobacter crescentus. Does not show activity against other bacteria tested (E.coli, Vibrio sp, Burkhoderia thailandensis, and Salmonella newport). The protein is Astexin-2 of Asticcacaulis excentricus (strain ATCC 15261 / DSM 4724 / KCTC 12464 / NCIMB 9791 / VKM B-1370 / CB 48).